The following is an 871-amino-acid chain: Dual O-methyltransferase/FAD-dependent monooxygenase CTB3 (871 aa).

An O-methyltransferase region spans residues 1 to 429; sequence MMQFQRDLEA…GLLTVRSAGQ (429 aa). Asp-279 contacts S-adenosyl-L-methionine. The active-site Proton acceptor is the His-331. Residues 430–871 form an FAD-dependent monooxygenase region; sequence TALSGTNTLT…NLVDCSEFVF (442 aa). Glu-485, Arg-569, and Ala-806 together coordinate FAD.

In the C-terminal section; belongs to the paxM FAD-dependent monooxygenase family. It in the N-terminal section; belongs to the class I-like SAM-binding methyltransferase superfamily. Cation-independent O-methyltransferase family. COMT subfamily.

It catalyses the reaction nor-toralactone + S-adenosyl-L-methionine = toralactone + S-adenosyl-L-homocysteine + H(+). It carries out the reaction toralactone + NADH + O2 + H(+) = 1-(3,4,5-trihydroxy-7-methoxynaphthalen-2-yl)propan-2-one + CO2 + NAD(+). Its pathway is mycotoxin biosynthesis. Functionally, dual O-methyltransferase/FAD-dependent monooxygenase; part of the gene cluster that mediates the biosynthesis of cercosporin, a light-activated, non-host-selective toxin. The perylenequinone chromophore of cercosporin absorbs light energy to attain an electronically-activated triplet state and produces active oxygen species such as the hydroxyl radical, superoxide, hydrogen peroxide or singlet oxygen upon reaction with oxygen molecules. These reactive oxygen species cause damage to various cellular components including lipids, proteins and nucleic acids. The first step of cercosporin biosynthesis is performed by the polyketide synthase CTB1 which catalyzes the formation of nor-toralactone. The starter unit acyltransferase (SAT) domain of CTB1 initiates polyketide extension by the selective utilization of acetyl-CoA, which is elongated to the heptaketide in the beta-ketoacyl synthase (KS) domain by successive condensations with six malonyl units introduced by the malonyl acyltransferase (MAT) domain. The product template (PT) domain catalyzes C4-C9 and C2-C11 aldol cyclizations and dehydrations to a trihydroxynaphthalene, which is thought to be delivered to the thioesterase (TE) domain for product release. The bifunctional enzyme CTB3 then methylates nor-toralactone to toralactone before conducting an unusual oxidative aromatic ring opening. The O-methyltransferase CTB2 further methylates the nascent OH-6 of the CBT3 product, blocking further oxidation at this site before the reductase CTB6 reduces the 2-oxopropyl ketone at position C7, giving naphthalene. The FAD-dependent monooxygenase CTB5 in concert with the multicopper oxidase CTB12 are responsible for homodimerization of naphthalene with CTB7 installing the dioxepine moiety, finally producing cercosporin. The fasciclin domain-containing protein CTB11 might act with CTB5 and CTB12 whereas the roles of CTB9 and CTB10 have still to be elucidated. The sequence is that of Dual O-methyltransferase/FAD-dependent monooxygenase CTB3 from Cercospora nicotianae (Barn spot disease fungus).